Consider the following 163-residue polypeptide: Cytochrome c-type biogenesis protein CcmE (163 aa).

Topologically, residues 1-8 (MNPRRKKR) are cytoplasmic. A helical; Signal-anchor for type II membrane protein membrane pass occupies residues 9–29 (LTIILAISAGLAAVIGLVLYA). The Periplasmic segment spans residues 30–163 (LSQNIDLFYT…TEAQLKGAKQ (134 aa)). 2 residues coordinate heme: His-131 and Tyr-135.

This sequence belongs to the CcmE/CycJ family.

The protein resides in the cell inner membrane. In terms of biological role, heme chaperone required for the biogenesis of c-type cytochromes. Transiently binds heme delivered by CcmC and transfers the heme to apo-cytochromes in a process facilitated by CcmF and CcmH. The protein is Cytochrome c-type biogenesis protein CcmE of Aeromonas salmonicida (strain A449).